A 224-amino-acid chain; its full sequence is Oocyte zinc finger protein XlCOF6.1 (224 aa).

8 consecutive C2H2-type zinc fingers follow at residues 6–28 (FSCSVCGKCFALKTELTIHCRSH), 34–56 (FHCTECGKYFQHRSNLRRHQRYH), 62–84 (FTCFECGTCFVNYSWLMLHIRMH), 90–112 (FSCSECGKRFARRSVLEAHQKIH), 118–140 (FSCSECGKGFIKQCDLARHYRTH), 146–168 (FPCPECGKCFTQSMQLIRHRRTH), 174–196 (FACSECGKCFAQNSHLTQHRLGH), and 202–224 (FSCSECGKCFSRRSHLIAHLKSH).

Belongs to the krueppel C2H2-type zinc-finger protein family.

The protein resides in the nucleus. Its function is as follows. May be involved in transcriptional regulation. This is Oocyte zinc finger protein XlCOF6.1 from Xenopus laevis (African clawed frog).